We begin with the raw amino-acid sequence, 383 residues long: ATP phosphoribosyltransferase regulatory subunit (383 aa).

The protein belongs to the class-II aminoacyl-tRNA synthetase family. HisZ subfamily. As to quaternary structure, heteromultimer composed of HisG and HisZ subunits.

The protein resides in the cytoplasm. It functions in the pathway amino-acid biosynthesis; L-histidine biosynthesis; L-histidine from 5-phospho-alpha-D-ribose 1-diphosphate: step 1/9. In terms of biological role, required for the first step of histidine biosynthesis. May allow the feedback regulation of ATP phosphoribosyltransferase activity by histidine. This is ATP phosphoribosyltransferase regulatory subunit from Neisseria meningitidis serogroup C / serotype 2a (strain ATCC 700532 / DSM 15464 / FAM18).